A 383-amino-acid polypeptide reads, in one-letter code: Succinyl-diaminopimelate desuccinylase (383 aa).

Residue His-74 participates in Zn(2+) binding. Asp-76 is a catalytic residue. Asp-107 is a binding site for Zn(2+). Catalysis depends on Glu-141, which acts as the Proton acceptor. 3 residues coordinate Zn(2+): Glu-142, Glu-170, and His-356.

Belongs to the peptidase M20A family. DapE subfamily. Homodimer. Zn(2+) serves as cofactor. Co(2+) is required as a cofactor.

It catalyses the reaction N-succinyl-(2S,6S)-2,6-diaminopimelate + H2O = (2S,6S)-2,6-diaminopimelate + succinate. The protein operates within amino-acid biosynthesis; L-lysine biosynthesis via DAP pathway; LL-2,6-diaminopimelate from (S)-tetrahydrodipicolinate (succinylase route): step 3/3. In terms of biological role, catalyzes the hydrolysis of N-succinyl-L,L-diaminopimelic acid (SDAP), forming succinate and LL-2,6-diaminopimelate (DAP), an intermediate involved in the bacterial biosynthesis of lysine and meso-diaminopimelic acid, an essential component of bacterial cell walls. This is Succinyl-diaminopimelate desuccinylase from Cupriavidus pinatubonensis (strain JMP 134 / LMG 1197) (Cupriavidus necator (strain JMP 134)).